Reading from the N-terminus, the 205-residue chain is Transcriptional regulator GfcR (205 aa).

The protein belongs to the purine/pyrimidine phosphoribosyltransferase family. GfcR subfamily.

This chain is Transcriptional regulator GfcR, found in Methanococcus vannielii (strain ATCC 35089 / DSM 1224 / JCM 13029 / OCM 148 / SB).